Reading from the N-terminus, the 525-residue chain is NAD(P)H-quinone oxidoreductase chain 4-1 (525 aa).

A run of 14 helical transmembrane segments spans residues 4–24, 37–57, 89–109, 111–131, 134–154, 167–187, 210–230, 241–261, 273–293, 309–329, 330–350, 385–405, 416–436, and 462–482; these read FPWL…IPII, LAVG…GFDL, LIIL…PVTL, PKLF…VFAV, ILLF…ILSI, FILY…TLAF, LLLY…FPLH, TAPA…YALL, AVFA…AAFT, ISHM…GMSG, AMLQ…MVGA, LALP…GFAT, IVVV…LSML, and VFII…PKLI.

This sequence belongs to the complex I subunit 4 family.

Its subcellular location is the cellular thylakoid membrane. The enzyme catalyses a plastoquinone + NADH + (n+1) H(+)(in) = a plastoquinol + NAD(+) + n H(+)(out). It carries out the reaction a plastoquinone + NADPH + (n+1) H(+)(in) = a plastoquinol + NADP(+) + n H(+)(out). NDH-1 shuttles electrons from NAD(P)H, via FMN and iron-sulfur (Fe-S) centers, to quinones in the respiratory chain. The immediate electron acceptor for the enzyme in this species is believed to be plastoquinone. Couples the redox reaction to proton translocation (for every two electrons transferred, four hydrogen ions are translocated across the cytoplasmic membrane), and thus conserves the redox energy in a proton gradient. In Synechocystis sp. (strain ATCC 27184 / PCC 6803 / Kazusa), this protein is NAD(P)H-quinone oxidoreductase chain 4-1 (ndhD1).